We begin with the raw amino-acid sequence, 523 residues long: MTSVLSSTPTSIPIIAGAQEALRDTLQQPTSVQYVPAAATSSLSDNVQLQSSNDSTINGVVIGLLSSFGSAILIALIFLIVYFFKYTSSGRILLDRIGRPGEYDDEQAFAKEEAEALEEMDDLQRTEYLRAKAFVQSNPPDSLPTDISLSQYLAIQEKGVSAWEFEPELEIANCFVEARTEIEFFDSECCTLTNLPVPKQNEVYYWESKIYDKPENTLISIGVATKPYPLFRLPGWHKYSVAYTSTGHRRYNQPFSGPVYGPQYVQGDVIGVGYRPRTGTIFFTRNGKKLEDVAHGLKSQNLFPAVGANGPCTVHVNFGQSGFVFIEANVKKWGLAPMTGSLAPPPPYGSEQGSILLEAGRESAQSSNGYYQPDPRHGRTRSGNFRHGPPTSPGPLRSPTDISLAQLTHIPSHEEPGEASNSSTPAPTGNTTTQPGLSVHDNAQPPPEYTSPLPSEAGSPRGSTDGERTPMLRRKTTPPPIPSYNDAVAQRNRSNSHRDQVGSRRERSDSHQARHGDGSPSRS.

The Cytoplasmic portion of the chain corresponds to 1–59; the sequence is MTSVLSSTPTSIPIIAGAQEALRDTLQQPTSVQYVPAAATSSLSDNVQLQSSNDSTING. The chain crosses the membrane as a helical; Signal-anchor for type II membrane protein span at residues 60–80; the sequence is VVIGLLSSFGSAILIALIFLI. At 81–523 the chain is on the lumenal side; sequence VYFFKYTSSG…RHGDGSPSRS (443 aa). The B30.2/SPRY domain occupies 127-323; it reads EYLRAKAFVQ…VHVNFGQSGF (197 aa). 2 disordered regions span residues 361-400 and 412-523; these read RESA…RSPT and SHEE…PSRS. A compositionally biased stretch (polar residues) spans 419-436; sequence ASNSSTPAPTGNTTTQPG. Residues Asn421, Asn430, and Asn492 are each glycosylated (N-linked (GlcNAc...) asparagine). Positions 496–517 are enriched in basic and acidic residues; the sequence is SHRDQVGSRRERSDSHQARHGD.

It belongs to the SSH4 family.

The protein localises to the vacuole membrane. Its subcellular location is the endosome membrane. Functionally, components of the endosome-vacuole trafficking pathway that regulates nutrient transport. May be involved in processes which determine whether plasma membrane proteins are degraded or routed to the plasma membrane. The chain is Protein ssh4 (ssh4) from Sclerotinia sclerotiorum (strain ATCC 18683 / 1980 / Ss-1) (White mold).